An 88-amino-acid polypeptide reads, in one-letter code: Small ribosomal subunit protein uS17 (88 aa).

The protein belongs to the universal ribosomal protein uS17 family. In terms of assembly, part of the 30S ribosomal subunit.

Its function is as follows. One of the primary rRNA binding proteins, it binds specifically to the 5'-end of 16S ribosomal RNA. In Pseudomonas entomophila (strain L48), this protein is Small ribosomal subunit protein uS17.